A 120-amino-acid chain; its full sequence is Peptidyl-tRNA hydrolase (120 aa).

Belongs to the PTH2 family. As to quaternary structure, homodimer.

Its subcellular location is the cytoplasm. It carries out the reaction an N-acyl-L-alpha-aminoacyl-tRNA + H2O = an N-acyl-L-amino acid + a tRNA + H(+). In terms of biological role, the natural substrate for this enzyme may be peptidyl-tRNAs which drop off the ribosome during protein synthesis. This is Peptidyl-tRNA hydrolase from Saccharolobus solfataricus (strain ATCC 35092 / DSM 1617 / JCM 11322 / P2) (Sulfolobus solfataricus).